The sequence spans 406 residues: Tryptophan synthase beta chain (406 aa).

Residue Lys95 is modified to N6-(pyridoxal phosphate)lysine.

Belongs to the TrpB family. In terms of assembly, tetramer of two alpha and two beta chains. The cofactor is pyridoxal 5'-phosphate.

The catalysed reaction is (1S,2R)-1-C-(indol-3-yl)glycerol 3-phosphate + L-serine = D-glyceraldehyde 3-phosphate + L-tryptophan + H2O. It functions in the pathway amino-acid biosynthesis; L-tryptophan biosynthesis; L-tryptophan from chorismate: step 5/5. Its function is as follows. The beta subunit is responsible for the synthesis of L-tryptophan from indole and L-serine. This Azotobacter vinelandii (strain DJ / ATCC BAA-1303) protein is Tryptophan synthase beta chain.